Here is a 482-residue protein sequence, read N- to C-terminus: tRNA sulfurtransferase (482 aa).

The region spanning 61-165 is the THUMP domain; sequence LAIRDALTRI…DDRLLLIKGR (105 aa). Residues 183-184, Lys265, Gly287, and Gln296 each bind ATP; that span reads LI. The cysteines at positions 344 and 456 are disulfide-linked. The Rhodanese domain maps to 404–482; that stretch reads FGPNDVILDI…GFNNVKVYRP (79 aa). Cys456 serves as the catalytic Cysteine persulfide intermediate.

This sequence belongs to the ThiI family.

Its subcellular location is the cytoplasm. The enzyme catalyses [ThiI sulfur-carrier protein]-S-sulfanyl-L-cysteine + a uridine in tRNA + 2 reduced [2Fe-2S]-[ferredoxin] + ATP + H(+) = [ThiI sulfur-carrier protein]-L-cysteine + a 4-thiouridine in tRNA + 2 oxidized [2Fe-2S]-[ferredoxin] + AMP + diphosphate. It carries out the reaction [ThiS sulfur-carrier protein]-C-terminal Gly-Gly-AMP + S-sulfanyl-L-cysteinyl-[cysteine desulfurase] + AH2 = [ThiS sulfur-carrier protein]-C-terminal-Gly-aminoethanethioate + L-cysteinyl-[cysteine desulfurase] + A + AMP + 2 H(+). The protein operates within cofactor biosynthesis; thiamine diphosphate biosynthesis. In terms of biological role, catalyzes the ATP-dependent transfer of a sulfur to tRNA to produce 4-thiouridine in position 8 of tRNAs, which functions as a near-UV photosensor. Also catalyzes the transfer of sulfur to the sulfur carrier protein ThiS, forming ThiS-thiocarboxylate. This is a step in the synthesis of thiazole, in the thiamine biosynthesis pathway. The sulfur is donated as persulfide by IscS. This chain is tRNA sulfurtransferase, found in Shigella boydii serotype 4 (strain Sb227).